The chain runs to 300 residues: ETS homologous factor (300 aa).

The 87-residue stretch at 29-115 (PTCNVSSGFF…SNLQHLKWNG (87 aa)) folds into the PNT domain. The interval 181–203 (VAESPDMKKEQDHPVKSHTKKHN) is disordered. Residues 185-195 (PDMKKEQDHPV) show a composition bias toward basic and acidic residues. Residues 207 to 289 (THLWEFIRDI…DGRRLVYKFG (83 aa)) constitute a DNA-binding region (ETS).

This sequence belongs to the ETS family. In terms of tissue distribution, highly expressed in kidney and lung, weakly in skeletal muscle, heart, and liver, and not detected in brain, spleen or testis.

The protein resides in the nucleus. Transcriptional activator that may play a role in regulating epithelial cell differentiation and proliferation. May act as a repressor for a specific subset of ETS/AP-1-responsive genes, and as a modulator of the nuclear response to mitogen-activated protein kinase signaling cascades. Binds to DNA sequences containing the consensus nucleotide core sequence GGAA. Involved in regulation of TNFRSF10B/DR5 expression through Ets-binding sequences on the TNFRSF10B/DR5 promoter. The sequence is that of ETS homologous factor from Mus musculus (Mouse).